The primary structure comprises 200 residues: Charged multivesicular body protein 6 (200 aa).

The N-myristoyl glycine moiety is linked to residue glycine 2. Positions 10 to 145 (QSRVTEQDRA…YQRQIDELLA (136 aa)) form a coiled coil. Residue serine 119 is modified to Phosphoserine. Phosphothreonine is present on threonine 130. Positions 168–179 (MELPEVPSEPLP) match the Type-2 MIT-interacting motif motif. The interval 168–200 (MELPEVPSEPLPDRNPEAPAKARSRQAELVAAS) is disordered.

This sequence belongs to the SNF7 family. In terms of assembly, probable core component of the endosomal sorting required for transport complex III (ESCRT-III). ESCRT-III components are thought to multimerize to form a flat lattice on the perimeter membrane of the endosome. Several assembly forms of ESCRT-III may exist that interact and act sequentially. Interacts with VPS4A; the interaction is direct. Interacts with VPS4B; the interaction is direct. Interacts with CHMP4A, CHMP4B and CHMP4C. Interacts with SNF8, VPS25 and VPS36. Post-translationally, ISGylated in a CHMP5-dependent manner. Isgylation weakens its interaction with VPS4A.

The protein localises to the endomembrane system. The protein resides in the endosome membrane. It is found in the late endosome membrane. It localises to the membrane. Probable core component of the endosomal sorting required for transport complex III (ESCRT-III) which is involved in multivesicular bodies (MVBs) formation and sorting of endosomal cargo proteins into MVBs. MVBs contain intraluminal vesicles (ILVs) that are generated by invagination and scission from the limiting membrane of the endosome and mostly are delivered to lysosomes enabling degradation of membrane proteins, such as stimulated growth factor receptors, lysosomal enzymes and lipids. The MVB pathway appears to require the sequential function of ESCRT-O, -I,-II and -III complexes. ESCRT-III proteins mostly dissociate from the invaginating membrane before the ILV is released. The ESCRT machinery also functions in topologically equivalent membrane fission events, such as the terminal stages of cytokinesis. ESCRT-III proteins are believed to mediate the necessary vesicle extrusion and/or membrane fission activities, possibly in conjunction with the AAA ATPase VPS4. In the ESCRT-III complex, it probably serves as an acceptor for the ESCRT-II complex on endosomal membranes. This chain is Charged multivesicular body protein 6 (Chmp6), found in Mus musculus (Mouse).